The following is a 92-amino-acid chain: Cell division protein FtsB (92 aa).

The Cytoplasmic segment spans residues 1–3 (MRL). The chain crosses the membrane as a helical span at residues 4–21 (FVFFMLCLLVLLQYHLWF). Residues 22–92 (GKNGLGDRHN…TFFRIVPKED (71 aa)) are Periplasmic-facing. Positions 28–62 (DRHNLQEEVTLILENNSELRQRNQMMFSEIKDLKE) form a coiled coil.

The protein belongs to the FtsB family. In terms of assembly, part of a complex composed of FtsB, FtsL and FtsQ.

The protein localises to the cell inner membrane. Essential cell division protein. May link together the upstream cell division proteins, which are predominantly cytoplasmic, with the downstream cell division proteins, which are predominantly periplasmic. This Psychromonas ingrahamii (strain DSM 17664 / CCUG 51855 / 37) protein is Cell division protein FtsB.